The primary structure comprises 105 residues: V-type ATP synthase subunit F (105 aa).

It belongs to the V-ATPase F subunit family.

In terms of biological role, produces ATP from ADP in the presence of a proton gradient across the membrane. This Clostridium perfringens (strain 13 / Type A) protein is V-type ATP synthase subunit F.